The sequence spans 163 residues: UPF0260 protein GOX1406 (163 aa).

This sequence belongs to the UPF0260 family.

This is UPF0260 protein GOX1406 from Gluconobacter oxydans (strain 621H) (Gluconobacter suboxydans).